The sequence spans 84 residues: Large ribosomal subunit protein bL31B (84 aa).

The protein belongs to the bacterial ribosomal protein bL31 family. Type B subfamily. In terms of assembly, part of the 50S ribosomal subunit.

This Rhodococcus opacus (strain B4) protein is Large ribosomal subunit protein bL31B.